Here is a 306-residue protein sequence, read N- to C-terminus: Ornithine carbamoyltransferase (306 aa).

Carbamoyl phosphate-binding positions include S50–T53, Q77, R101, and H128–Q131. L-ornithine contacts are provided by residues N160, D224, and S228 to M229. Carbamoyl phosphate contacts are provided by residues C264–L265 and R292.

It belongs to the aspartate/ornithine carbamoyltransferase superfamily. OTCase family.

It localises to the cytoplasm. It carries out the reaction carbamoyl phosphate + L-ornithine = L-citrulline + phosphate + H(+). Its pathway is amino-acid biosynthesis; L-arginine biosynthesis; L-arginine from L-ornithine and carbamoyl phosphate: step 1/3. Its function is as follows. Reversibly catalyzes the transfer of the carbamoyl group from carbamoyl phosphate (CP) to the N(epsilon) atom of ornithine (ORN) to produce L-citrulline. The sequence is that of Ornithine carbamoyltransferase from Mycobacterium leprae (strain TN).